A 145-amino-acid chain; its full sequence is Peptidyl-lysine N-acetyltransferase YjaB (145 aa).

The 142-residue stretch at 3–144 (INIRRSRHEE…KPYPLLNLIY (142 aa)) folds into the N-acetyltransferase domain.

This sequence belongs to the acetyltransferase family.

The enzyme catalyses L-lysyl-[protein] + acetyl-CoA = N(6)-acetyl-L-lysyl-[protein] + CoA + H(+). N-epsilon-lysine acetyltransferase that catalyzes acetylation of a large number of proteins. This Salmonella typhimurium (strain LT2 / SGSC1412 / ATCC 700720) protein is Peptidyl-lysine N-acetyltransferase YjaB (yjaB).